The chain runs to 255 residues: MKAYAKANIFLKLTGFDSRKYHLLESRFILLKDVFDELELVDKESDSKKEFEIISNFKCENNIIQKAYLLLSKRYNNELKELFSKKSLKLTKNIPVCAGLGGGSSDCASFLLLMNETLNLKLNLQELINLSIQLGSDIAFFLSGFHSANVSGCGEIIEEFEDDIPNLKWTFPQISCQTKAVYDEFDRGIFDFQKNNNQAQIYKKLSTKELLQNFKNKELNDLFTPCATLYPKMKSYLQEDFFLSGSGSSVFKVDR.

K6 is a catalytic residue. Residue 95 to 105 (PVCAGLGGGSS) coordinates ATP. D137 is an active-site residue.

Belongs to the GHMP kinase family. IspE subfamily.

It carries out the reaction 4-CDP-2-C-methyl-D-erythritol + ATP = 4-CDP-2-C-methyl-D-erythritol 2-phosphate + ADP + H(+). It participates in isoprenoid biosynthesis; isopentenyl diphosphate biosynthesis via DXP pathway; isopentenyl diphosphate from 1-deoxy-D-xylulose 5-phosphate: step 3/6. Its function is as follows. Catalyzes the phosphorylation of the position 2 hydroxy group of 4-diphosphocytidyl-2C-methyl-D-erythritol. This Campylobacter jejuni subsp. jejuni serotype O:23/36 (strain 81-176) protein is 4-diphosphocytidyl-2-C-methyl-D-erythritol kinase.